A 493-amino-acid polypeptide reads, in one-letter code: Glutamyl-tRNA(Gln) amidotransferase subunit A (493 aa).

Residues Lys-79 and Ser-159 each act as charge relay system in the active site. Ser-183 serves as the catalytic Acyl-ester intermediate.

The protein belongs to the amidase family. GatA subfamily. In terms of assembly, heterotrimer of A, B and C subunits.

It carries out the reaction L-glutamyl-tRNA(Gln) + L-glutamine + ATP + H2O = L-glutaminyl-tRNA(Gln) + L-glutamate + ADP + phosphate + H(+). Functionally, allows the formation of correctly charged Gln-tRNA(Gln) through the transamidation of misacylated Glu-tRNA(Gln) in organisms which lack glutaminyl-tRNA synthetase. The reaction takes place in the presence of glutamine and ATP through an activated gamma-phospho-Glu-tRNA(Gln). In Rhizobium meliloti (strain 1021) (Ensifer meliloti), this protein is Glutamyl-tRNA(Gln) amidotransferase subunit A.